We begin with the raw amino-acid sequence, 222 residues long: Transmembrane reductase CYB561D2 (222 aa).

The Cytoplasmic portion of the chain corresponds to Ala-2–Thr-17. The Cytochrome b561 domain occupies Ala-14 to Arg-217. Residues Ala-18–Ala-38 traverse the membrane as a helical segment. The Lumenal portion of the chain corresponds to Arg-39–Ser-46. The chain crosses the membrane as a helical span at residues Trp-47–Phe-67. His-48 lines the heme b pocket. Residues Ser-68 to Cys-85 lie on the Cytoplasmic side of the membrane. The heme b site is built by His-86 and His-120. A helical membrane pass occupies residues His-86–Leu-106. At His-107–Gln-122 the chain is on the lumenal side. Residues Ala-123–Tyr-143 form a helical membrane-spanning segment. The Cytoplasmic segment spans residues Pro-144–Ser-162. Residue His-159 participates in heme b binding. A helical membrane pass occupies residues Gly-163–Phe-183. Residues Thr-184–Thr-186 lie on the Lumenal side of the membrane. The helical transmembrane segment at Val-187–Met-207 threads the bilayer. Residues Asn-208–Pro-222 are Cytoplasmic-facing.

Heme b is required as a cofactor. As to expression, highly expressed in the brain, lung, liver, and kidney. Moderately expressed in the heart, placenta, skeletal muscle, and pancreas.

Its subcellular location is the endoplasmic reticulum membrane. It localises to the cytoplasmic vesicle membrane. It catalyses the reaction monodehydro-L-ascorbate radical(out) + L-ascorbate(in) = monodehydro-L-ascorbate radical(in) + L-ascorbate(out). The enzyme catalyses Fe(3+)(out) + L-ascorbate(in) = monodehydro-L-ascorbate radical(in) + Fe(2+)(out) + H(+). In terms of biological role, transmembrane reductase that may use ascorbate as an electron donor in the cytoplasm and transfer electrons across endoplasmic reticulum membranes to reduce monodehydro-L-ascorbate radical and iron cations Fe(3+) in the lumen of that compartment. In Mus musculus (Mouse), this protein is Transmembrane reductase CYB561D2.